The following is a 91-amino-acid chain: Small ribosomal subunit protein bS20 (91 aa).

Residues 1 to 18 (MPLHKSAEKRLRQSERRN) are compositionally biased toward basic and acidic residues. Residues 1-25 (MPLHKSAEKRLRQSERRNARNRARK) form a disordered region.

The protein belongs to the bacterial ribosomal protein bS20 family.

Functionally, binds directly to 16S ribosomal RNA. This Chlorobium luteolum (strain DSM 273 / BCRC 81028 / 2530) (Pelodictyon luteolum) protein is Small ribosomal subunit protein bS20.